The chain runs to 178 residues: Protein GrpE (178 aa).

The disordered stretch occupies residues 1–22; that stretch reads MSENQNPSPSPEEIEAAMSANA.

This sequence belongs to the GrpE family. As to quaternary structure, homodimer.

Its subcellular location is the cytoplasm. In terms of biological role, participates actively in the response to hyperosmotic and heat shock by preventing the aggregation of stress-denatured proteins, in association with DnaK and GrpE. It is the nucleotide exchange factor for DnaK and may function as a thermosensor. Unfolded proteins bind initially to DnaJ; upon interaction with the DnaJ-bound protein, DnaK hydrolyzes its bound ATP, resulting in the formation of a stable complex. GrpE releases ADP from DnaK; ATP binding to DnaK triggers the release of the substrate protein, thus completing the reaction cycle. Several rounds of ATP-dependent interactions between DnaJ, DnaK and GrpE are required for fully efficient folding. The chain is Protein GrpE from Acidovorax ebreus (strain TPSY) (Diaphorobacter sp. (strain TPSY)).